We begin with the raw amino-acid sequence, 250 residues long: 5-oxoprolinase subunit A (250 aa).

It belongs to the LamB/PxpA family. Forms a complex composed of PxpA, PxpB and PxpC.

The enzyme catalyses 5-oxo-L-proline + ATP + 2 H2O = L-glutamate + ADP + phosphate + H(+). Its function is as follows. Catalyzes the cleavage of 5-oxoproline to form L-glutamate coupled to the hydrolysis of ATP to ADP and inorganic phosphate. The protein is 5-oxoprolinase subunit A of Nocardia farcinica (strain IFM 10152).